The primary structure comprises 30 residues: Scolopendra 20528.11 Da toxin (30 aa).

It belongs to the CRISP family. Venom allergen 5-like subfamily. Contains 3 disulfide bonds. As to expression, expressed by the venom gland.

The protein localises to the secreted. The chain is Scolopendra 20528.11 Da toxin from Scolopendra angulata (Barbados giant red centipede).